A 197-amino-acid chain; its full sequence is dITP/XTP pyrophosphatase (197 aa).

Residue 8–13 (TGNPGK) participates in substrate binding. Positions 40 and 69 each coordinate Mg(2+). The active-site Proton acceptor is the Asp69. Substrate-binding positions include Ser70, 154-157 (FGYD), Lys177, and 182-183 (HR).

Belongs to the HAM1 NTPase family. In terms of assembly, homodimer. The cofactor is Mg(2+).

The enzyme catalyses XTP + H2O = XMP + diphosphate + H(+). It carries out the reaction dITP + H2O = dIMP + diphosphate + H(+). The catalysed reaction is ITP + H2O = IMP + diphosphate + H(+). Pyrophosphatase that catalyzes the hydrolysis of nucleoside triphosphates to their monophosphate derivatives, with a high preference for the non-canonical purine nucleotides XTP (xanthosine triphosphate), dITP (deoxyinosine triphosphate) and ITP. Seems to function as a house-cleaning enzyme that removes non-canonical purine nucleotides from the nucleotide pool, thus preventing their incorporation into DNA/RNA and avoiding chromosomal lesions. This Yersinia pseudotuberculosis serotype I (strain IP32953) protein is dITP/XTP pyrophosphatase.